The primary structure comprises 191 residues: MANVDRDRRVHVDRTDKRVHQPNYEDDVGFGGYGGYGAGSDYKSRGPSTNQILALIAGVPIGGTLLTLAGLTLAGSVIGLLVSIPLFLLFSPVIVPAALTIGLAVTGILASGLFGLTGLSSVSWVLNYLRGTSDTVPEQLDYAKRRMADAVGYAGMKGKEMGQYVQDKAHEARETEFMTETHEPGKARRGS.

An N-acetylalanine modification is found at A2. The polar stretch occupies residues 2 to 54; sequence ANVDRDRRVHVDRTDKRVHQPNYEDDVGFGGYGGYGAGSDYKSRGPSTNQILA. The next 2 helical transmembrane spans lie at 52 to 72 and 99 to 119; these read ILAL…AGLT and LTIG…LTGL. The hydrophobic stretch occupies residues 55-128; the sequence is LIAGVPIGGT…LSSVSWVLNY (74 aa).

This sequence belongs to the oleosin family.

Its subcellular location is the lipid droplet. It localises to the membrane. Functionally, may have a structural role to stabilize the lipid body during desiccation of the seed by preventing coalescence of the oil. Probably interacts with both lipid and phospholipid moieties of lipid bodies. May also provide recognition signals for specific lipase anchorage in lipolysis during seedling growth. The protein is Oleosin 20.3 kDa (OL2) of Arabidopsis thaliana (Mouse-ear cress).